The sequence spans 637 residues: tRNA uridine 5-carboxymethylaminomethyl modification enzyme MnmG (637 aa).

14 to 19 (GAGHAG) contributes to the FAD binding site. 279 to 293 (GPRYCPSIEDKVVRF) is an NAD(+) binding site.

The protein belongs to the MnmG family. Homodimer. Heterotetramer of two MnmE and two MnmG subunits. FAD serves as cofactor.

The protein resides in the cytoplasm. In terms of biological role, NAD-binding protein involved in the addition of a carboxymethylaminomethyl (cmnm) group at the wobble position (U34) of certain tRNAs, forming tRNA-cmnm(5)s(2)U34. The protein is tRNA uridine 5-carboxymethylaminomethyl modification enzyme MnmG of Desulfitobacterium hafniense (strain DSM 10664 / DCB-2).